Consider the following 90-residue polypeptide: MNADGPVVNVHVLFFAKSRELANTPRSTVDVPTEITANELLDHLVSKFGLISIRDNLILAHNESYIDNLSDRILFKEGDELAVIPPLSGG.

1-thioglycine; alternate is present on G90. Glycyl adenylate; alternate is present on G90.

It belongs to the MoaD family. MOCS2A subfamily. In terms of assembly, heterotetramer; composed of 2 small (Mocs2A) and 2 large (Mocs2B) subunits. Post-translationally, C-terminal thiocarboxylation occurs in 2 steps, it is first acyl-adenylated (-COAMP) via the hesA/moeB/thiF part of MOCS3, then thiocarboxylated (-COSH) via the rhodanese domain of MOCS3.

Its subcellular location is the cytoplasm. The protein operates within cofactor biosynthesis; molybdopterin biosynthesis. Acts as a sulfur carrier required for molybdopterin biosynthesis. Component of the molybdopterin synthase complex that catalyzes the conversion of precursor Z into molybdopterin by mediating the incorporation of 2 sulfur atoms into precursor Z to generate a dithiolene group. In the complex, serves as sulfur donor by being thiocarboxylated (-COSH) at its C-terminus by MOCS3. After interaction with Mocs2B, the sulfur is then transferred to precursor Z to form molybdopterin. The polypeptide is Molybdopterin synthase sulfur carrier subunit (Drosophila sechellia (Fruit fly)).